Reading from the N-terminus, the 198-residue chain is RNA 2',3'-cyclic phosphodiesterase (198 aa).

The active-site Proton donor is H39. Short sequence motifs (HXTX) lie at residues 39 to 42 (HLTL) and 130 to 133 (HITL). H130 serves as the catalytic Proton acceptor.

It belongs to the 2H phosphoesterase superfamily. ThpR family.

It catalyses the reaction a 3'-end 2',3'-cyclophospho-ribonucleotide-RNA + H2O = a 3'-end 2'-phospho-ribonucleotide-RNA + H(+). Its function is as follows. Hydrolyzes RNA 2',3'-cyclic phosphodiester to an RNA 2'-phosphomonoester. This is RNA 2',3'-cyclic phosphodiesterase from Thermus thermophilus (strain ATCC 27634 / DSM 579 / HB8).